The chain runs to 253 residues: 5'/3'-nucleotidase SurE (253 aa).

A divalent metal cation is bound by residues Asp-8, Asp-9, Ser-39, and Asn-92.

This sequence belongs to the SurE nucleotidase family. The cofactor is a divalent metal cation.

The protein resides in the cytoplasm. The enzyme catalyses a ribonucleoside 5'-phosphate + H2O = a ribonucleoside + phosphate. It carries out the reaction a ribonucleoside 3'-phosphate + H2O = a ribonucleoside + phosphate. The catalysed reaction is [phosphate](n) + H2O = [phosphate](n-1) + phosphate + H(+). In terms of biological role, nucleotidase with a broad substrate specificity as it can dephosphorylate various ribo- and deoxyribonucleoside 5'-monophosphates and ribonucleoside 3'-monophosphates with highest affinity to 3'-AMP. Also hydrolyzes polyphosphate (exopolyphosphatase activity) with the preference for short-chain-length substrates (P20-25). Might be involved in the regulation of dNTP and NTP pools, and in the turnover of 3'-mononucleotides produced by numerous intracellular RNases (T1, T2, and F) during the degradation of various RNAs. The chain is 5'/3'-nucleotidase SurE from Escherichia coli O17:K52:H18 (strain UMN026 / ExPEC).